A 266-amino-acid chain; its full sequence is MKLSLSPPPYADAPVVVLISGLGGSGSYWLPQLAVLEQEYQVVCYDQRGTGNNPDTLAEDYSIAQMAAELHQALVAAGIEHYAVVGHALGALVGMQLALDYPASVTVLISVNGWLRINAHTRRCFQVRERLLYSGGAQAWVEAQPLFLYPADWMAARAPRLEAEDALALAHFQGKNNLLRRLNALKRADFSHHADRIRCPVQIICASDDLLVPSACSSELHAALPDSQKMVMPYGGHACNVTDPETFNALLLNGLASLLHHREAAL.

This sequence belongs to the AB hydrolase superfamily. Hydrolase RutD family.

It carries out the reaction carbamate + 2 H(+) = NH4(+) + CO2. Involved in pyrimidine catabolism. May facilitate the hydrolysis of carbamate, a reaction that can also occur spontaneously. In Escherichia coli O111:H- (strain 11128 / EHEC), this protein is Putative carbamate hydrolase RutD.